Reading from the N-terminus, the 1852-residue chain is Dihydropyridine-sensitive L-type skeletal muscle calcium channel subunit alpha-1 (1852 aa).

Residues 1–70 are Cytoplasmic-facing; the sequence is MESGSGGGGG…KTCINIVEWK (70 aa). An I repeat occupies 57-354; the sequence is NPFRKTCINI…LVLGALSGEF (298 aa). Residues 71–86 form a helical membrane-spanning segment; it reads PFEIIILLTIFANCVA. Residues 87–107 lie on the Extracellular side of the membrane; it reads LAVFLPMPEEDTNNTNLTLES. Asn99 and Asn102 each carry an N-linked (GlcNAc...) asparagine glycan. Residues 108–127 traverse the membrane as a helical segment; that stretch reads LEYIFLVIFTLECFLKIVAY. The Cytoplasmic portion of the chain corresponds to 128–139; that stretch reads GLLFHEGAYLRN. Residues 140-155 traverse the membrane as a helical segment; that stretch reads CWNILDFVIVFMGLFT. Over 156-176 the chain is Extracellular; sequence LVVDTINTIAGVPTEKGGGFD. The chain crosses the membrane as a helical span at residues 177 to 195; sequence MKALRAFRVLRPLRLVSGV. At 196–214 the chain is on the cytoplasmic side; sequence PSLQVVMSSILKSMLPLFH. A helical membrane pass occupies residues 215–234; sequence IALLVFFMVHIYAIMGLELF. Residues 235–326 are Extracellular-facing; it reads KCKMHKTCYY…WINDAMGNDW (92 aa). N-linked (GlcNAc...) asparagine glycosylation is present at Asn274. A helical membrane pass occupies residues 327-351; the sequence is PWIYFLTLILVGSFFILNLVLGALS. Topologically, residues 352–447 are cytoplasmic; it reads GEFTKEREES…RKCHVWVKSK (96 aa). The binding to the beta subunit stretch occupies residues 374–391; sequence QQMDEDLEGYMEWITHAE. One copy of the II repeat lies at 433-679; it reads NVVLRRKCHV…VFLAIAVDNL (247 aa). The chain crosses the membrane as a helical span at residues 448–466; sequence FFNWWVLLVVLLNTLVIAM. The Extracellular segment spans residues 467 to 481; it reads EHHNQTEGLTSFQDT. Asn470 carries N-linked (GlcNAc...) asparagine glycosylation. A helical transmembrane segment spans residues 482–501; that stretch reads ANVILLACFTIEMVMKMYAF. The Cytoplasmic portion of the chain corresponds to 502–509; sequence GPRAYFMS. The chain crosses the membrane as a helical span at residues 510–528; it reads IFNRFDCFVVTIGILEIIL. At 529–538 the chain is on the extracellular side; sequence VVSNIMTPLG. Residues 539–557 form a helical membrane-spanning segment; sequence ISVMRCIRLLRLFKLTRYW. The Cytoplasmic segment spans residues 558-576; that stretch reads TSLNNLVASLLNSVKSIAS. Residues 577 to 596 traverse the membrane as a helical segment; that stretch reads LLLLLFLFIVIFALLGMQVF. Topologically, residues 597–651 are extracellular; that stretch reads GGKFNFPDRVIQRSNFDNFPQALISVFQVLTGEEWDSIMYNGIMAHGGPQSPGIL. A helical transmembrane segment spans residues 652-675; the sequence is VSIYFIILYVCGNFVLLNVFLAIA. At 676–815 the chain is on the cytoplasmic side; sequence VDNLAEAESL…KLCHRIVNHT (140 aa). One copy of the III repeat lies at 802 to 1084; sequence HKFRKLCHRI…IFVGFVIVTF (283 aa). Residues 816-834 form a helical membrane-spanning segment; sequence TFTNIILLFILLSSISLAA. Residues 835–850 are Extracellular-facing; that stretch reads EDPIDPRSFRNKVLAY. A helical membrane pass occupies residues 851 to 870; the sequence is ADIVFTTVFTIEIVLKMTVY. At 871–882 the chain is on the cytoplasmic side; sequence GAFLHTGSFCRN. The helical transmembrane segment at 883 to 901 threads the bilayer; it reads SFNILDLIVVGVSLLSMGM. Over 902–908 the chain is Extracellular; sequence ESSTISV. The chain crosses the membrane as a helical span at residues 909–927; that stretch reads VKILRVLRVLRPLRAINRA. Residues 928–946 lie on the Cytoplasmic side of the membrane; it reads KGLKHVVQCMFVAIKTIGN. The helical transmembrane segment at 947–966 threads the bilayer; that stretch reads IVLVTMLLDFMFACIGVQLF. Topologically, residues 967-1056 are extracellular; the sequence is KGKLYYCTDP…TGPLYNNRVG (90 aa). A dihydropyridine binding region spans residues 1004–1093; sequence RMWVNSDFNF…FQKQGEQEYK (90 aa). Residues 1057–1081 form a helical membrane-spanning segment; the sequence is ISIFFIIYIIIIAFFMMNIFVGFVI. At 1082-1134 the chain is on the cytoplasmic side; that stretch reads VTFQKQGEQEYKDCELDKNQRQCVQYALKARPLKCYIPKNPHQYRVWYFVTSC. An IV repeat occupies 1121–1405; the sequence is NPHQYRVWYF…LFVAIIMDNV (285 aa). A helical membrane pass occupies residues 1135–1153; that stretch reads YFEYLMFFLIMLNTLCLGI. Over 1154-1168 the chain is Extracellular; sequence QHCNQSDHITKLSDT. A glycan (N-linked (GlcNAc...) asparagine) is linked at Asn1157. A helical membrane pass occupies residues 1169 to 1188; sequence LNLIFTVLFTGEMIVKLIAF. At 1189–1196 the chain is on the cytoplasmic side; it reads KAKGYFGD. Residues 1197–1215 traverse the membrane as a helical segment; that stretch reads PWNVFDFIIVVGSIVDVVL. Topologically, residues 1216 to 1252 are extracellular; sequence SEVDAALEARGGLWCLHGCAEVNPMQAIAEAENVRVS. The helical transmembrane segment at 1253 to 1271 threads the bilayer; sequence ITFFRLFRVLRLIKLLNRS. The Cytoplasmic segment spans residues 1272-1290; sequence EGIRNLLWTFIKSFQALPH. Residues 1291–1310 traverse the membrane as a helical segment; that stretch reads VGLLIVMLFFIYAVIGMQMF. Residues 1311-1377 lie on the Extracellular side of the membrane; that stretch reads GKVALVDGTE…GEEYTCGSSI (67 aa). The tract at residues 1358–1424 is dihydropyridine binding; it reads LCDAKSDYGP…LGPHHLDEFK (67 aa). The interval 1370–1413 is phenylalkylamine binding; sequence EYTCGSSIAVFYFLSFYILCAFLIINLFVAIIMDNVDYLTRDWS. The helical transmembrane segment at 1378–1402 threads the bilayer; sequence AVFYFLSFYILCAFLIINLFVAIIM. Residues 1403 to 1852 lie on the Cytoplasmic side of the membrane; it reads DNVDYLTRDW…TKPKENTSAV (450 aa). An EF-hand domain is found at 1418 to 1453; the sequence is HHLDEFKKIWAEYDPEATGRIKHLDVVTLLRRIQPP. The Ca(2+) site is built by Asp1431, Glu1433, Thr1435, Arg1437, and Asp1442. The segment at 1820–1852 is disordered; the sequence is NRQSGKVTKRKRRPIPVPPGTKSTKPKENTSAV.

Belongs to the calcium channel alpha-1 subunit (TC 1.A.1.11) family. Multisubunit complex consisting of alpha-1, alpha-2, beta and delta subunits in a 1:1:1:1 ratio. The channel activity is directed by the pore-forming and voltage-sensitive alpha-1 subunit. In many cases, this subunit is sufficient to generate voltage-sensitive calcium channel activity. The auxiliary subunits beta and alpha-2/delta linked by a disulfide bridge regulate the channel activity. An additional gamma subunit is present only in skeletal muscle L-type channel. In terms of processing, may be non-phosphorylated. As to expression, skeletal muscle.

The protein localises to the membrane. Its function is as follows. Voltage-sensitive calcium channels (VSCC) mediate the entry of calcium ions into excitable cells and are also involved in a variety of calcium-dependent processes, including muscle contraction, gene expression, cell motility, cell division and cell death. The isoform alpha-1S gives rise to L-type calcium currents. Long-lasting (L-type) calcium channels belong to the 'high-voltage activated' (HVA) group. They are blocked by dihydropyridines (DHP), phenylalkylamines, and by benzothiazepines. Calcium channels containing the alpha-1S subunit play an important role in excitation-contraction coupling in skeletal muscle. This is Dihydropyridine-sensitive L-type skeletal muscle calcium channel subunit alpha-1 from Cyprinus carpio (Common carp).